Consider the following 411-residue polypeptide: Tyrosine--tRNA ligase (411 aa).

Positions 48–57 (PTAPDIHLGH) match the 'HIGH' region motif. The 'KMSKS' region signature appears at 232–236 (KMSKS). Residue lysine 235 participates in ATP binding. The 63-residue stretch at 347 to 409 (VLLPKVLFSA…GKRRFLKIIF (63 aa)) folds into the S4 RNA-binding domain.

The protein belongs to the class-I aminoacyl-tRNA synthetase family. TyrS type 2 subfamily. As to quaternary structure, homodimer.

The protein localises to the cytoplasm. The enzyme catalyses tRNA(Tyr) + L-tyrosine + ATP = L-tyrosyl-tRNA(Tyr) + AMP + diphosphate + H(+). In terms of biological role, catalyzes the attachment of tyrosine to tRNA(Tyr) in a two-step reaction: tyrosine is first activated by ATP to form Tyr-AMP and then transferred to the acceptor end of tRNA(Tyr). The polypeptide is Tyrosine--tRNA ligase (Carboxydothermus hydrogenoformans (strain ATCC BAA-161 / DSM 6008 / Z-2901)).